Reading from the N-terminus, the 89-residue chain is Small ribosomal subunit protein uS14 (89 aa).

Belongs to the universal ribosomal protein uS14 family. In terms of assembly, part of the 30S ribosomal subunit. Contacts proteins S3 and S10.

Binds 16S rRNA, required for the assembly of 30S particles and may also be responsible for determining the conformation of the 16S rRNA at the A site. The polypeptide is Small ribosomal subunit protein uS14 (Oenococcus oeni (strain ATCC BAA-331 / PSU-1)).